A 644-amino-acid chain; its full sequence is DNA gyrase subunit B (644 aa).

The region spanning 429 to 543 is the Toprim domain; it reads CEIFLVEGDS…AGYVYIAQPP (115 aa). Glu435, Asp508, and Asp510 together coordinate Mg(2+).

It belongs to the type II topoisomerase GyrB family. Heterotetramer, composed of two GyrA and two GyrB chains. In the heterotetramer, GyrA contains the active site tyrosine that forms a transient covalent intermediate with DNA, while GyrB binds cofactors and catalyzes ATP hydrolysis. The cofactor is Mg(2+). Requires Mn(2+) as cofactor. Ca(2+) serves as cofactor.

It localises to the cytoplasm. The enzyme catalyses ATP-dependent breakage, passage and rejoining of double-stranded DNA.. A type II topoisomerase that negatively supercoils closed circular double-stranded (ds) DNA in an ATP-dependent manner to modulate DNA topology and maintain chromosomes in an underwound state. Negative supercoiling favors strand separation, and DNA replication, transcription, recombination and repair, all of which involve strand separation. Also able to catalyze the interconversion of other topological isomers of dsDNA rings, including catenanes and knotted rings. Type II topoisomerases break and join 2 DNA strands simultaneously in an ATP-dependent manner. The sequence is that of DNA gyrase subunit B from Staphylococcus aureus (strain USA300).